The following is a 148-amino-acid chain: FAD synthase (148 aa).

Residues 14-15, 19-22, and aspartate 100 each bind ATP; these read VF and HAGH.

Belongs to the archaeal FAD synthase family. In terms of assembly, homodimer. A divalent metal cation serves as cofactor.

It carries out the reaction FMN + ATP + H(+) = FAD + diphosphate. It participates in cofactor biosynthesis; FAD biosynthesis; FAD from FMN: step 1/1. Catalyzes the transfer of the AMP portion of ATP to flavin mononucleotide (FMN) to produce flavin adenine dinucleotide (FAD) coenzyme. The chain is FAD synthase from Pyrococcus horikoshii (strain ATCC 700860 / DSM 12428 / JCM 9974 / NBRC 100139 / OT-3).